The sequence spans 191 residues: NF-kappa-B inhibitor-interacting Ras-like protein 2 (191 aa).

The segment at 1–191 (MGKSCKVVVC…KNKGSGSVDG (191 aa)) is small GTPase-like. 11–18 (GQAAVGKT) is a GTP binding site. The short motif at 35-43 (MIETQEDIY) is the Effector region element. GTP-binding positions include 61-65 (DTRGL) and 120-123 (NKCD). The segment at 170 to 191 (QPQSKSAFPLSRKNKGSGSVDG) is disordered.

The protein belongs to the small GTPase superfamily. Ras family. KappaB-Ras subfamily.

It is found in the cytoplasm. Its function is as follows. Atypical Ras-like protein that acts as a potent regulator of NF-kappa-B activity by preventing the degradation of NF-kappa-B inhibitor beta (NFKBIB) by most signals, explaining why NFKBIB is more resistant to degradation. This chain is NF-kappa-B inhibitor-interacting Ras-like protein 2 (NKIRAS2), found in Gallus gallus (Chicken).